Reading from the N-terminus, the 152-residue chain is uncharacterized protein (152 aa).

Residues 1-5 (MWFPQ) are Cytoplasmic-facing. Residues 6-26 (IIAGMAAGGAASAMTPGKVLF) traverse the membrane as a helical segment. Residues 27-38 (TNALGLGCSRSR) are Extracellular-facing. A helical transmembrane segment spans residues 39 to 59 (GLFLEMFGTAVLCFTVLMTAV). Residues 60 to 65 (EKRETN) lie on the Cytoplasmic side of the membrane. The chain crosses the membrane as a helical span at residues 66 to 86 (FMAALPIGISLFMAHMALTGY). Residues 87 to 110 (TGTGVNPARSLGAAVAARYFPHYH) are Extracellular-facing. The NPA signature appears at 92 to 94 (NPA). Residues 111 to 131 (WIYWISPLLGAFLAWSVWQLL) traverse the membrane as a helical segment. At 132–152 (QILDYTTYVNAEKAAGQKKED) the chain is on the cytoplasmic side.

Belongs to the MIP/aquaporin (TC 1.A.8) family.

The protein resides in the membrane. This is an uncharacterized protein from Saccharomyces cerevisiae (strain YJM789) (Baker's yeast).